A 103-amino-acid polypeptide reads, in one-letter code: Small ribosomal subunit protein uS10 (103 aa).

Belongs to the universal ribosomal protein uS10 family. Part of the 30S ribosomal subunit.

Involved in the binding of tRNA to the ribosomes. This Hahella chejuensis (strain KCTC 2396) protein is Small ribosomal subunit protein uS10.